Here is a 320-residue protein sequence, read N- to C-terminus: Acetyl-coenzyme A carboxylase carboxyl transferase subunit alpha (320 aa).

Residues 41 to 295 (KIEEKAQQAL…GDAIAAAFAE (255 aa)) enclose the CoA carboxyltransferase C-terminal domain.

Belongs to the AccA family. In terms of assembly, acetyl-CoA carboxylase is a heterohexamer composed of biotin carboxyl carrier protein (AccB), biotin carboxylase (AccC) and two subunits each of ACCase subunit alpha (AccA) and ACCase subunit beta (AccD).

It is found in the cytoplasm. It catalyses the reaction N(6)-carboxybiotinyl-L-lysyl-[protein] + acetyl-CoA = N(6)-biotinyl-L-lysyl-[protein] + malonyl-CoA. It participates in lipid metabolism; malonyl-CoA biosynthesis; malonyl-CoA from acetyl-CoA: step 1/1. Component of the acetyl coenzyme A carboxylase (ACC) complex. First, biotin carboxylase catalyzes the carboxylation of biotin on its carrier protein (BCCP) and then the CO(2) group is transferred by the carboxyltransferase to acetyl-CoA to form malonyl-CoA. This Rhodopseudomonas palustris (strain ATCC BAA-98 / CGA009) protein is Acetyl-coenzyme A carboxylase carboxyl transferase subunit alpha.